The sequence spans 762 residues: Alpha-xylosidase XylQ (762 aa).

The active-site Nucleophile is D414. Residue E417 is part of the active site.

This sequence belongs to the glycosyl hydrolase 31 family.

Its subcellular location is the cell membrane. It catalyses the reaction Hydrolysis of terminal, non-reducing alpha-D-xylose residues with release of alpha-D-xylose.. Involved in the metabolism of isoprimeverose. Hydrolyzes isoprimeverose into equimolar amounts of glucose and xylose. In vitro, can also use p-nitrophenyl-alpha-D-xylopyranoside (alpha-p-NPX). This chain is Alpha-xylosidase XylQ, found in Lactiplantibacillus pentosus (Lactobacillus pentosus).